The chain runs to 257 residues: Glutamate racemase (257 aa).

Residues 12–13 (DS) and 44–45 (YG) contribute to the substrate site. Residue cysteine 75 is the Proton donor/acceptor of the active site. Residue 76–77 (NT) coordinates substrate. Cysteine 185 serves as the catalytic Proton donor/acceptor. 186-187 (TH) lines the substrate pocket.

This sequence belongs to the aspartate/glutamate racemases family.

The catalysed reaction is L-glutamate = D-glutamate. It functions in the pathway cell wall biogenesis; peptidoglycan biosynthesis. In terms of biological role, provides the (R)-glutamate required for cell wall biosynthesis. In Clostridium botulinum (strain Langeland / NCTC 10281 / Type F), this protein is Glutamate racemase.